The chain runs to 1002 residues: MKTTVTKLLATVAAASTIFGMSTLPAFAAEGKSASNGNSVNISDVNATAETRALFDKLKNSGKGDLRFGQQHATDENISSSASQGDVYETTGKYPAVFGWDAGLALRGAEKPGSGADKNANAKALAQNITDADSKGAIVTLSAHWCNPGTGKDFNDTTAVASELLPGGKYSGTFNKELDAIAATAQRAKRSDGTLIPIIFRPLHENNGSWFWWGATHASASEYKELYRYIVDYLRDVKDVHNLLYAYSPGGVFNGDSTDYLATYPGDQWVDVLGYDEYDSDDSADDSSAWINTVVKDMKMVSDQASQRGKIVALTEFGRSGDRKFKESGTGDKDTKFFSELAEALAENVPSTAYMMTWANFGGGGDNFQAYTSWKGSDGEADFKAFADSNKNLMASKDNVDYSNAPAAAMQNGSARIVTPVDGNRVTDTKVVVRVKTEGVKYSDLDLNSAIVTTDRGQNVKLKYSCNGYFTGILDLNAAGINLDQSKLTLTPQVKTKDGKTLAAADGNGSVTVKLGAKPEQTVDNVEDFDSYDNEAELQSVYSPSHSTKSNLTLVDSPEDNGTKAGNIHYDFVSYPEYNGFQRSHTPKQDWSGFSKLNMFLKADGSDHKFVVQVNAGGVTFEAYPKIDGTDGHVVSLNFGDADGNGGDFAPASWDTAHAGMKLSQKLLSKVGSFALYINDNGGNRPKSGDLTLDSIKLDGKRDAYAPNTNPTPGNTAKAQSVDDFSGYSDDAAAQSAWGNRGHTEVLSLDEGPTDGSKALRFKYDFSNGGWYDVAKYLDGANWSGESVLAFQVKGDGSGNAIGLQIGTSDGKYFLASVKLDFTGWKQIEIPLVDNANLTQSWPEDANKDNPMTEDDLASIKELVFASQQWNSESDGLDSSIADIKVEPAENTSNEQTPKDESKTEVKADKEQEQSEDTSADVTAQDPATCPISDEDSKGSTGNTTVTVKPTPDTKEPADNTGKDGLSRTGSNIISAIAAVAVLLLGGCAVLIARKRKGGDIE.

Positions 1–28 (MKTTVTKLLATVAAASTIFGMSTLPAFA) are cleaved as a signal peptide. Residues 49–396 (AETRALFDKL…ADSNKNLMAS (348 aa)) form the GH26 domain. Histidine 144 is a substrate binding site. Glutamate 205 (proton donor) is an active-site residue. Substrate-binding residues include tryptophan 210 and tyrosine 278. Glutamate 316 acts as the Nucleophile in catalysis. Substrate is bound at residue lysine 384. CBM11 domains follow at residues 523–703 (VDNV…GKRD) and 717–897 (AKAQ…NEQT). Disordered regions lie at residues 702–722 (RDAYAPNTNPTPGNTAKAQSV) and 888–969 (PAEN…LSRT). Residues 707 to 719 (PNTNPTPGNTAKA) are compositionally biased toward polar residues. 2 stretches are compositionally biased toward basic and acidic residues: residues 897–913 (TPKDESKTEVKADKEQE) and 952–966 (PDTKEPADNTGKDGL). Positions 966-970 (LSRTG) match the LPXTG sorting signal motif. Threonine 969 carries the post-translational modification Pentaglycyl murein peptidoglycan amidated threonine. The propeptide at 970–1002 (GSNIISAIAAVAVLLLGGCAVLIARKRKGGDIE) is removed by sortase.

It belongs to the glycosyl hydrolase 26 family. In terms of assembly, homodimer.

The protein resides in the secreted. It localises to the cell wall. The enzyme catalyses Random hydrolysis of (1-&gt;4)-beta-D-mannosidic linkages in mannans, galactomannans and glucomannans.. Its function is as follows. Beta-mannanase likely involved in the utilization of carbohydrates in the human gut. Catalyzes the hydrolysis of different beta-1,4-linked mannans, such as ivory nut mannan, konjac glucomannan, as well as carob and guar gum galactomannans, to a mixture of oligosaccharides. The dominant product from ivory nut mannan is found to be mannotriose; mannobiose and mannotetraose are produced to a lesser extent. Does not hydrolyze mannobiose, and hydrolyzes mannotriose at a significantly lower rate than the longer oligosaccharides. The sequence is that of Mannan endo-1,4-beta-mannosidase from Bifidobacterium adolescentis (strain ATCC 15703 / DSM 20083 / NCTC 11814 / E194a).